Consider the following 430-residue polypeptide: Zinc finger and SCAN domain-containing protein 4 (430 aa).

The disordered stretch occupies residues 1–38 (MASDLRISFQGEPSRNDPGSENLEHKPSQGPAVQEEEE). The SCAN box domain maps to 44-126 (RTQLSLLQNS…KFMEDLTDES (83 aa)). A compositionally biased stretch (polar residues) spans 164–185 (GSPTGTDMETPSWTPQDTSLET). Disordered regions lie at residues 164-196 (GSPTGTDMETPSWTPQDTSLETGQGEWGDKENG), 224-257 (YPRPEEDSVSLKNPLSSRKAGLGMSGSQEGSLKG), and 281-300 (EPVPTHQRTEGNSTRGGHQE). C2H2-type zinc fingers lie at residues 309–331 (YRCEKCPKIFRYFSQLKAHQRRH), 337–359 (FTCAECNRGFFQASDLHVHQKIH), 365–387 (FTCSTCEKSFSHKTNLLAHERIH), and 393–415 (YECSLCHRSYRQSSTYHRHLRNH).

It is found in the nucleus. The protein localises to the chromosome. Its subcellular location is the telomere. Its function is as follows. Embryonic stem (ES) cell-specific transcription factor required to regulate ES cell pluripotency. Binds telomeres and plays a key role in genomic stability in ES cells by regulating telomere elongation. Acts as an activator of spontaneous telomere sister chromatid exchange (T-SCE) and telomere elongation in undifferentiated ES cells. The polypeptide is Zinc finger and SCAN domain-containing protein 4 (ZSCAN4) (Ailuropoda melanoleuca (Giant panda)).